The chain runs to 314 residues: Malate dehydrogenase (314 aa).

Residues G11–G16 and D35 each bind NAD(+). Substrate is bound by residues R84 and R90. Residues N97 and I120–N122 contribute to the NAD(+) site. Substrate-binding residues include N122 and R153. The active-site Proton acceptor is the H177.

It belongs to the LDH/MDH superfamily. MDH type 3 family.

It carries out the reaction (S)-malate + NAD(+) = oxaloacetate + NADH + H(+). Its function is as follows. Catalyzes the reversible oxidation of malate to oxaloacetate. The chain is Malate dehydrogenase from Rickettsia conorii (strain ATCC VR-613 / Malish 7).